The chain runs to 259 residues: 3-deoxy-manno-octulosonate cytidylyltransferase (259 aa).

Belongs to the KdsB family.

The protein localises to the cytoplasm. The catalysed reaction is 3-deoxy-alpha-D-manno-oct-2-ulosonate + CTP = CMP-3-deoxy-beta-D-manno-octulosonate + diphosphate. The protein operates within nucleotide-sugar biosynthesis; CMP-3-deoxy-D-manno-octulosonate biosynthesis; CMP-3-deoxy-D-manno-octulosonate from 3-deoxy-D-manno-octulosonate and CTP: step 1/1. It participates in bacterial outer membrane biogenesis; lipopolysaccharide biosynthesis. Activates KDO (a required 8-carbon sugar) for incorporation into bacterial lipopolysaccharide in Gram-negative bacteria. The polypeptide is 3-deoxy-manno-octulosonate cytidylyltransferase (Alkalilimnicola ehrlichii (strain ATCC BAA-1101 / DSM 17681 / MLHE-1)).